Consider the following 134-residue polypeptide: Transcription antitermination protein NusB (134 aa).

This sequence belongs to the NusB family.

In terms of biological role, involved in transcription antitermination. Required for transcription of ribosomal RNA (rRNA) genes. Binds specifically to the boxA antiterminator sequence of the ribosomal RNA (rrn) operons. This Shewanella baltica (strain OS223) protein is Transcription antitermination protein NusB.